The following is a 47-amino-acid chain: PhoP/PhoQ regulator MgrB (47 aa).

Residues 6–26 form a helical membrane-spanning segment; sequence WVLLIVIIAGCLLLWTQMLNV.

The protein belongs to the MgrB family. As to quaternary structure, may form homooligomers. Probably interacts with the periplasmic domain of PhoQ.

It is found in the cell inner membrane. Its function is as follows. PhoP-regulated transcription is redox-sensitive, being activated when the periplasm becomes more reducing. MgrB acts between DsbA/DsbB and PhoP/PhoQ in this pathway. Represses PhoP/PhoQ signaling, possibly by binding to the periplasmic domain of PhoQ, altering its activity and that of downstream effector PhoP. This Klebsiella pneumoniae (strain 342) protein is PhoP/PhoQ regulator MgrB.